The chain runs to 371 residues: Alanine dehydrogenase (371 aa).

Residues arginine 15 and lysine 75 each contribute to the substrate site. Catalysis depends on histidine 96, which acts as the Proton donor/acceptor. Residues serine 134, 178–179, aspartate 198, serine 220, 239–240, 267–270, arginine 279, and 298–301 each bind NAD(+); these read TA, VL, IAID, and VANM. Aspartate 270 serves as the catalytic Proton donor/acceptor.

This sequence belongs to the AlaDH/PNT family. As to quaternary structure, homohexamer. Trimer of dimers.

The protein resides in the cytoplasm. It carries out the reaction L-alanine + NAD(+) + H2O = pyruvate + NH4(+) + NADH + H(+). The protein operates within amino-acid degradation; L-alanine degradation via dehydrogenase pathway; NH(3) and pyruvate from L-alanine: step 1/1. Catalyzes the reversible reductive amination of pyruvate to L-alanine. Required for proficient utilization of D- or L-alanine as a nitrogen source. May be required for the adaptation from aerobic growth to anaerobic dormancy. It could be involved in the maintenance of the NAD pool during the shift to an anaerobic dormant state in which oxygen as a terminal electron acceptor becomes limiting. The sequence is that of Alanine dehydrogenase from Mycolicibacterium smegmatis (strain ATCC 700084 / mc(2)155) (Mycobacterium smegmatis).